A 427-amino-acid polypeptide reads, in one-letter code: Homogentisate 1,2-dioxygenase (427 aa).

The Proton acceptor role is filled by histidine 285. The Fe cation site is built by histidine 328 and glutamate 334. Homogentisate is bound by residues tyrosine 343 and histidine 364. Residue histidine 364 participates in Fe cation binding.

This sequence belongs to the homogentisate dioxygenase family. In terms of assembly, hexamer; dimer of trimers. The cofactor is Fe cation.

The enzyme catalyses homogentisate + O2 = 4-maleylacetoacetate + H(+). The protein operates within amino-acid degradation; L-phenylalanine degradation; acetoacetate and fumarate from L-phenylalanine: step 4/6. Functionally, involved in the catabolism of homogentisate (2,5-dihydroxyphenylacetate or 2,5-OH-PhAc), a central intermediate in the degradation of phenylalanine and tyrosine. Catalyzes the oxidative ring cleavage of the aromatic ring of homogentisate to yield maleylacetoacetate. This Caulobacter sp. (strain K31) protein is Homogentisate 1,2-dioxygenase.